Consider the following 251-residue polypeptide: ATP synthase subunit a (251 aa).

7 helical membrane-spanning segments follow: residues 29–49 (FTQS…ITLV), 56–73 (LVPG…EFIA), 87–107 (FVPL…FGMI), 117–137 (IIVT…YGFM), 159–181 (LIVA…RLFA), 192–212 (IFAG…LSPL), and 218–238 (VAIT…FATL).

The protein belongs to the ATPase A chain family. As to quaternary structure, F-type ATPases have 2 components, CF(1) - the catalytic core - and CF(0) - the membrane proton channel. CF(1) has five subunits: alpha(3), beta(3), gamma(1), delta(1), epsilon(1). CF(0) has three main subunits: a(1), b(2) and c(9-12). The alpha and beta chains form an alternating ring which encloses part of the gamma chain. CF(1) is attached to CF(0) by a central stalk formed by the gamma and epsilon chains, while a peripheral stalk is formed by the delta and b chains.

It is found in the cell inner membrane. Functionally, key component of the proton channel; it plays a direct role in the translocation of protons across the membrane. The protein is ATP synthase subunit a of Methylobacterium sp. (strain 4-46).